We begin with the raw amino-acid sequence, 814 residues long: Rap guanine nucleotide exchange factor 5 (814 aa).

The 76-residue stretch at 43–118 folds into the DEP domain; the sequence is LQAADLVKDR…DNYVFYQFSS (76 aa). The N-terminal Ras-GEF domain occupies 301 to 434; the sequence is ARYVVVSGTP…ELKEFQKILG (134 aa). Residues 578–813 form the Ras-GEF domain; sequence NTWDLALELM…FELSHRLEPR (236 aa).

The protein resides in the nucleus. Functionally, guanine nucleotide exchange factor (GEF) for RAP1A, RAP2A and MRAS/M-Ras-GTP. Its association with MRAS inhibits Rap1 activation. In Mus musculus (Mouse), this protein is Rap guanine nucleotide exchange factor 5 (Rapgef5).